Reading from the N-terminus, the 140-residue chain is Large ribosomal subunit protein uL16 (140 aa).

This sequence belongs to the universal ribosomal protein uL16 family. Part of the 50S ribosomal subunit.

In terms of biological role, binds 23S rRNA and is also seen to make contacts with the A and possibly P site tRNAs. The protein is Large ribosomal subunit protein uL16 of Citrifermentans bemidjiense (strain ATCC BAA-1014 / DSM 16622 / JCM 12645 / Bem) (Geobacter bemidjiensis).